A 340-amino-acid polypeptide reads, in one-letter code: Protein RecA (340 aa).

65–72 (GPESGGKT) provides a ligand contact to ATP.

The protein belongs to the RecA family.

The protein localises to the cytoplasm. In terms of biological role, can catalyze the hydrolysis of ATP in the presence of single-stranded DNA, the ATP-dependent uptake of single-stranded DNA by duplex DNA, and the ATP-dependent hybridization of homologous single-stranded DNAs. It interacts with LexA causing its activation and leading to its autocatalytic cleavage. This chain is Protein RecA, found in Thermus aquaticus.